We begin with the raw amino-acid sequence, 159 residues long: Ribosomal RNA large subunit methyltransferase H (159 aa).

S-adenosyl-L-methionine contacts are provided by residues Leu-76, Gly-108, and 127 to 132 (FGLLTL).

This sequence belongs to the RNA methyltransferase RlmH family. Homodimer.

The protein resides in the cytoplasm. The catalysed reaction is pseudouridine(1915) in 23S rRNA + S-adenosyl-L-methionine = N(3)-methylpseudouridine(1915) in 23S rRNA + S-adenosyl-L-homocysteine + H(+). In terms of biological role, specifically methylates the pseudouridine at position 1915 (m3Psi1915) in 23S rRNA. This is Ribosomal RNA large subunit methyltransferase H from Streptococcus pyogenes serotype M18 (strain MGAS8232).